We begin with the raw amino-acid sequence, 251 residues long: Ubiquinone/menaquinone biosynthesis C-methyltransferase UbiE (251 aa).

Residues Thr-74, Asp-95, and 123–124 (NA) each bind S-adenosyl-L-methionine.

The protein belongs to the class I-like SAM-binding methyltransferase superfamily. MenG/UbiE family.

It carries out the reaction a 2-demethylmenaquinol + S-adenosyl-L-methionine = a menaquinol + S-adenosyl-L-homocysteine + H(+). The catalysed reaction is a 2-methoxy-6-(all-trans-polyprenyl)benzene-1,4-diol + S-adenosyl-L-methionine = a 5-methoxy-2-methyl-3-(all-trans-polyprenyl)benzene-1,4-diol + S-adenosyl-L-homocysteine + H(+). It participates in quinol/quinone metabolism; menaquinone biosynthesis; menaquinol from 1,4-dihydroxy-2-naphthoate: step 2/2. It functions in the pathway cofactor biosynthesis; ubiquinone biosynthesis. In terms of biological role, methyltransferase required for the conversion of demethylmenaquinol (DMKH2) to menaquinol (MKH2) and the conversion of 2-polyprenyl-6-methoxy-1,4-benzoquinol (DDMQH2) to 2-polyprenyl-3-methyl-6-methoxy-1,4-benzoquinol (DMQH2). In Shewanella halifaxensis (strain HAW-EB4), this protein is Ubiquinone/menaquinone biosynthesis C-methyltransferase UbiE.